Consider the following 408-residue polypeptide: Succinylornithine transaminase (408 aa).

An N6-(pyridoxal phosphate)lysine modification is found at Lys252.

The protein belongs to the class-III pyridoxal-phosphate-dependent aminotransferase family. AstC subfamily. It depends on pyridoxal 5'-phosphate as a cofactor.

It carries out the reaction N(2)-succinyl-L-ornithine + 2-oxoglutarate = N-succinyl-L-glutamate 5-semialdehyde + L-glutamate. It participates in amino-acid degradation; L-arginine degradation via AST pathway; L-glutamate and succinate from L-arginine: step 3/5. Functionally, catalyzes the transamination of N(2)-succinylornithine and alpha-ketoglutarate into N(2)-succinylglutamate semialdehyde and glutamate. Can also act as an acetylornithine aminotransferase. The chain is Succinylornithine transaminase from Salmonella newport (strain SL254).